The chain runs to 260 residues: Putative enoyl-CoA hydratase/isomerase YngF (260 aa).

It belongs to the enoyl-CoA hydratase/isomerase family.

The protein is Putative enoyl-CoA hydratase/isomerase YngF (yngF) of Bacillus subtilis (strain 168).